The sequence spans 667 residues: MRFNLKAPFEPRGDQPEAITRLVEGLRRGDRFQTLLGVTGSGKTFTMASIIERVQQPALVISPNKALVAQLYREFRSFFPENRVELFISYYDYYQPEAYIPTKDLYIEKDADINDLLARMRISALKSVLTRKDVVVVASVSAIYASGDPRDFQELNISLEIGQRIPRNELALKLASIQYSRSEDISSGGVFHLRGDVVEIFPPYEDYGIRIYFFDDEIERIISFDPMNRKTLEEFDRIIIYPAKEFVTTEEKIKHAVKEIERDLELRAKELEKNGKYLEAQRLKQRTLYDLEMLTTLGYCSGIENYSRYFDGRKPGEPPYTILDYFDKSEMIVFLDESHITVPQIRAMYHGDHSRKKNLVEYGFRLPSAFDNRPLTFEEFLESVGQIIFVSATPGDYELSVSTQIVEQLIRPTGLIDPEVVVKPTQNQVDDFIEEVQKVIERGERALVTVLTKKAAEMFSAYLNELGIRAEYLHSELDTVERVEVLKKLREGSVDVVVGVNLLREGLDLPEVSLVAIMDADKEGFLRSETTLIQTIGRAARNINGKVLLYADRITNSMKRAIEETNRRRMKQLMYNIEHDIKPESIVKPLYENIFEEFADNEEKIEIAKNTYLDGILALKEDLEAEEYLALLEEEMWRASSELRYEDAAMLRDEMLRIKRETKKDNI.

Positions 24 to 195 (EGLRRGDRFQ…SSGGVFHLRG (172 aa)) constitute a Helicase ATP-binding domain. Residue 37–44 (GVTGSGKT) participates in ATP binding. Positions 90-113 (YYDYYQPEAYIPTKDLYIEKDADI) match the Beta-hairpin motif. The 154-residue stretch at 428-581 (QVDDFIEEVQ…QLMYNIEHDI (154 aa)) folds into the Helicase C-terminal domain. Residues 626–661 (EEYLALLEEEMWRASSELRYEDAAMLRDEMLRIKRE) enclose the UVR domain.

Belongs to the UvrB family. In terms of assembly, forms a heterotetramer with UvrA during the search for lesions. Interacts with UvrC in an incision complex.

It localises to the cytoplasm. In terms of biological role, the UvrABC repair system catalyzes the recognition and processing of DNA lesions. A damage recognition complex composed of 2 UvrA and 2 UvrB subunits scans DNA for abnormalities. Upon binding of the UvrA(2)B(2) complex to a putative damaged site, the DNA wraps around one UvrB monomer. DNA wrap is dependent on ATP binding by UvrB and probably causes local melting of the DNA helix, facilitating insertion of UvrB beta-hairpin between the DNA strands. Then UvrB probes one DNA strand for the presence of a lesion. If a lesion is found the UvrA subunits dissociate and the UvrB-DNA preincision complex is formed. This complex is subsequently bound by UvrC and the second UvrB is released. If no lesion is found, the DNA wraps around the other UvrB subunit that will check the other stand for damage. The chain is UvrABC system protein B from Kosmotoga olearia (strain ATCC BAA-1733 / DSM 21960 / TBF 19.5.1).